The sequence spans 907 residues: Phototropin-2 (907 aa).

Residues 28 to 84 (ATAGLEIVAEDAPSGSSGAHQQQAWRPVAPATAGRDSGGTGSGKSSVDGGVGRASHD) are disordered. A compositionally biased stretch (polar residues) spans 41–51 (SGSSGAHQQQA). Residues 89–162 (VSQELKDALS…AKIRDAVKHG (74 aa)) form the PAS 1 domain. FMN is bound by residues 138–143 (NCRFLQ), R156, N171, N181, and Q202. Residue C139 is modified to S-4a-FMN cysteine. The 55-residue stretch at 163-217 (RSFCGRLLNYRKDGAPFWNLLTVTPIRDDNGKVIKFIGMQVEVSKYTEGLSDKRM) folds into the PAC 1 domain. Residues 332-363 (RSSVGSREAPAVVEEPAPAPPPAPEVVERTDS) are disordered. The 74-residue stretch at 375 to 448 (QGIDLATTLE…DKIREAIREQ (74 aa)) folds into the PAS 2 domain. Residues 424–429 (NCRFLQ), R442, N457, N467, and Q488 contribute to the FMN site. C425 is modified (S-4a-FMN cysteine). Residues 449 to 503 (KEITVQLINYTKSGKKFWNLFHLQPMRDQKGELQYFIGVQLDGSDHVEPLRNRLS) form the PAC 2 domain. Residues 576 to 863 (FKPVKPLGCG…ANDIKQHSFF (288 aa)) enclose the Protein kinase domain. ATP-binding positions include 582-590 (LGCGDTGSV) and K605. The active-site Proton acceptor is D701.

The protein belongs to the protein kinase superfamily. Ser/Thr protein kinase family. In terms of assembly, homodimer. The cofactor is FMN. Post-translationally, autophosphorylated in response to blue light irradiation. In terms of processing, 2 molecules of FMN bind covalently to cysteines after exposure to blue light and are reversed in the dark. Expressed at low levels in leaves of dark-grown seedlings.

It carries out the reaction L-seryl-[protein] + ATP = O-phospho-L-seryl-[protein] + ADP + H(+). The enzyme catalyses L-threonyl-[protein] + ATP = O-phospho-L-threonyl-[protein] + ADP + H(+). Functionally, protein kinase that acts as a blue light photoreceptor in a signal-transduction pathway for phototropic responses. Regulates a wide range of physiological activities in plants that maximize the efficiency of photosynthesis, such as chloroplast relocations, stomata opening, and leaf expansion. In Oryza sativa subsp. japonica (Rice), this protein is Phototropin-2 (PHOT2).